The following is an 89-amino-acid chain: Small ribosomal subunit protein uS15 (89 aa).

It belongs to the universal ribosomal protein uS15 family. As to quaternary structure, part of the 30S ribosomal subunit. Forms a bridge to the 50S subunit in the 70S ribosome, contacting the 23S rRNA.

One of the primary rRNA binding proteins, it binds directly to 16S rRNA where it helps nucleate assembly of the platform of the 30S subunit by binding and bridging several RNA helices of the 16S rRNA. In terms of biological role, forms an intersubunit bridge (bridge B4) with the 23S rRNA of the 50S subunit in the ribosome. This chain is Small ribosomal subunit protein uS15, found in Anaeromyxobacter sp. (strain Fw109-5).